An 817-amino-acid polypeptide reads, in one-letter code: Nuclear hormone receptor family member nhr-48 (817 aa).

The interval 49–91 is disordered; the sequence is YNDDKDDPFYEDEGSGGGTSGGGKKSSRKRANTTSSSGGNEKE. A compositionally biased stretch (acidic residues) spans 52–62; it reads DKDDPFYEDEG. The span at 63–72 shows a compositional bias: gly residues; sequence SGGGTSGGGK. A DNA-binding region (nuclear receptor) is located at residues 97 to 172; sequence NKVCRVCGDK…VGMKKEWIMS (76 aa). 2 consecutive NR C4-type zinc fingers follow at residues 100 to 120 and 136 to 155; these read CRVC…CESC and CPFN…CQRC. Acidic residues predominate over residues 202–212; that stretch reads ACMEDESENSY. Disordered regions lie at residues 202-221 and 258-284; these read ACME…PSHQ and MNFY…SSQL. A compositionally biased stretch (polar residues) spans 273-284; it reads LPSNSCASSSQL.

This sequence belongs to the nuclear hormone receptor family.

The protein localises to the nucleus. Its function is as follows. Orphan nuclear receptor. The protein is Nuclear hormone receptor family member nhr-48 (nhr-48) of Caenorhabditis elegans.